A 72-amino-acid polypeptide reads, in one-letter code: Translation initiation factor IF-1 (72 aa).

In terms of domain architecture, S1-like spans 1–72 (MSKDDVIEMQ…SRGRITWRAK (72 aa)).

This sequence belongs to the IF-1 family. As to quaternary structure, component of the 30S ribosomal translation pre-initiation complex which assembles on the 30S ribosome in the order IF-2 and IF-3, IF-1 and N-formylmethionyl-tRNA(fMet); mRNA recruitment can occur at any time during PIC assembly.

The protein resides in the cytoplasm. Its function is as follows. One of the essential components for the initiation of protein synthesis. Stabilizes the binding of IF-2 and IF-3 on the 30S subunit to which N-formylmethionyl-tRNA(fMet) subsequently binds. Helps modulate mRNA selection, yielding the 30S pre-initiation complex (PIC). Upon addition of the 50S ribosomal subunit IF-1, IF-2 and IF-3 are released leaving the mature 70S translation initiation complex. In Clostridium novyi (strain NT), this protein is Translation initiation factor IF-1.